We begin with the raw amino-acid sequence, 174 residues long: Co-chaperone protein HscB homolog (174 aa).

One can recognise a J domain in the interval 2–74; it reads NYFNLFNFTP…LRRAEHLLSL (73 aa).

It belongs to the HscB family. In terms of assembly, interacts with HscA and stimulates its ATPase activity.

Co-chaperone involved in the maturation of iron-sulfur cluster-containing proteins. Seems to help targeting proteins to be folded toward HscA. In Shewanella denitrificans (strain OS217 / ATCC BAA-1090 / DSM 15013), this protein is Co-chaperone protein HscB homolog.